The chain runs to 453 residues: MPKGFLVKRNKKAALVSYRIRTDEDGGPTPECPIAQIALSSPAPSASKPDSILLAFPSAGAEAPVPVHKPVQFGNPEAVYQALYSPTRPVSKDHDRKYFERSLNLGSPISAESFPTPASLTSLDHHLLFAPVDLKIGTSNSNRSGTASGAHAPAIQTGAKRPSADAAERKVSSKSAKKPKAIRKLNFEDEVTTSPVLGLKIKEGPVDLKPRPSSGGTNKPLGEFICQLCKEEYSDPFSLAQHKCSRIVRVEYRCPECEKVFSCPANLASHRRWHKPRVQSAPKQALQPAKPFPEELRAEFPSDRDTPSPGLSESGSEDGLYDCQHCGKRFKRQAYLRKHILGHQALQNQILGEAFRSAESPDAMPSEDRQSPAPLNLSPADCLTCPACGEKLPNRASLERHLRLLHDDAQAFPCKFCPATFYSSPGLTRHINKCHPTENRQVILLQMPVRNAC.

The segment at 1–20 (MPKGFLVKRNKKAALVSYRI) is SNAG domain. Residues 140-179 (NSNRSGTASGAHAPAIQTGAKRPSADAAERKVSSKSAKKP) are disordered. Residues 162-171 (PSADAAERKV) are compositionally biased toward basic and acidic residues. The C2H2-type 1 zinc finger occupies 252–274 (YRCPECEKVFSCPANLASHRRWH). Residues 298–318 (AEFPSDRDTPSPGLSESGSED) are disordered. C2H2-type zinc fingers lie at residues 321-343 (YDCQHCGKRFKRQAYLRKHILGH), 383-406 (LTCPACGEKLPNRASLERHLRLLH), and 412-435 (FPCKFCPATFYSSPGLTRHINKCH).

This sequence belongs to the INSM1 family.

It localises to the nucleus. In terms of biological role, may act as a transcriptional regulator. May play a role in neurogenesis and neuroendocrine cell differentiation during embryonic development. This Danio rerio (Zebrafish) protein is Insulinoma-associated protein 1b (insm1b).